We begin with the raw amino-acid sequence, 371 residues long: Homoserine O-acetyltransferase (371 aa).

The region spanning 44-350 (NAILVEHAWT…SYGHDAFLLE (307 aa)) is the AB hydrolase-1 domain. The active-site Nucleophile is the S150. Residue R217 participates in substrate binding. Active-site residues include D311 and H344. D345 contributes to the substrate binding site.

It belongs to the AB hydrolase superfamily. MetX family. As to quaternary structure, homodimer.

The protein resides in the cytoplasm. The catalysed reaction is L-homoserine + acetyl-CoA = O-acetyl-L-homoserine + CoA. The protein operates within amino-acid biosynthesis; L-methionine biosynthesis via de novo pathway; O-acetyl-L-homoserine from L-homoserine: step 1/1. Transfers an acetyl group from acetyl-CoA to L-homoserine, forming acetyl-L-homoserine. The sequence is that of Homoserine O-acetyltransferase from Pelobacter propionicus (strain DSM 2379 / NBRC 103807 / OttBd1).